Here is a 353-residue protein sequence, read N- to C-terminus: Histidinol-phosphate aminotransferase (353 aa).

The residue at position 211 (Lys-211) is an N6-(pyridoxal phosphate)lysine.

The protein belongs to the class-II pyridoxal-phosphate-dependent aminotransferase family. Histidinol-phosphate aminotransferase subfamily. Homodimer. The cofactor is pyridoxal 5'-phosphate.

The catalysed reaction is L-histidinol phosphate + 2-oxoglutarate = 3-(imidazol-4-yl)-2-oxopropyl phosphate + L-glutamate. The protein operates within amino-acid biosynthesis; L-histidine biosynthesis; L-histidine from 5-phospho-alpha-D-ribose 1-diphosphate: step 7/9. The sequence is that of Histidinol-phosphate aminotransferase from Klebsiella pneumoniae (strain 342).